Consider the following 296-residue polypeptide: UDP-N-acetylenolpyruvoylglucosamine reductase (296 aa).

In terms of domain architecture, FAD-binding PCMH-type spans 18-189 (LGGRALAEVR…TGADIVLRRG (172 aa)). The active site involves Arg-166. The Proton donor role is filled by Cys-218. Residue Glu-289 is part of the active site.

This sequence belongs to the MurB family. It depends on FAD as a cofactor.

The protein localises to the cytoplasm. It carries out the reaction UDP-N-acetyl-alpha-D-muramate + NADP(+) = UDP-N-acetyl-3-O-(1-carboxyvinyl)-alpha-D-glucosamine + NADPH + H(+). It participates in cell wall biogenesis; peptidoglycan biosynthesis. Its function is as follows. Cell wall formation. In Nitratidesulfovibrio vulgaris (strain ATCC 29579 / DSM 644 / CCUG 34227 / NCIMB 8303 / VKM B-1760 / Hildenborough) (Desulfovibrio vulgaris), this protein is UDP-N-acetylenolpyruvoylglucosamine reductase.